Reading from the N-terminus, the 784-residue chain is Lon protease (784 aa).

The 194-residue stretch at 11 to 204 (IPVLPLRDVV…YLMAMMESEI (194 aa)) folds into the Lon N-terminal domain. Residue 356–363 (GPPGVGKT) coordinates ATP. Positions 592 to 773 (ENRVGQVTGL…EEVLTLALQN (182 aa)) constitute a Lon proteolytic domain. Catalysis depends on residues S679 and K722.

The protein belongs to the peptidase S16 family. Homohexamer. Organized in a ring with a central cavity. ATP binding and hydrolysis do not affect the oligomeric state of the enzyme.

It localises to the cytoplasm. The catalysed reaction is Hydrolysis of proteins in presence of ATP.. With respect to regulation, contains an allosteric site (distinct from its active site), whose occupancy by an unfolded polypeptide leads to enzyme activation. Its function is as follows. ATP-dependent serine protease that mediates the selective degradation of mutant and abnormal proteins as well as certain short-lived regulatory proteins. Required for cellular homeostasis and for survival from DNA damage and developmental changes induced by stress. Degrades polypeptides processively to yield small peptide fragments that are 5 to 10 amino acids long. Binds to DNA in a double-stranded, site-specific manner. Endogenous substrates include the regulatory proteins RcsA and SulA, the transcriptional activator SoxS, and UmuD. Its overproduction specifically inhibits translation through at least two different pathways, one of them being the YoeB-YefM toxin-antitoxin system. The sequence is that of Lon protease from Escherichia coli O6:H1 (strain CFT073 / ATCC 700928 / UPEC).